The chain runs to 366 residues: Trans-enoyl reductase caaB (366 aa).

Positions 19 to 363 constitute an Enoyl reductase (ER) domain; sequence GAGQLSIYHD…RQTVSGHKLV (345 aa). Tyr-219 is a binding site for NADP(+).

It belongs to the zinc-containing alcohol dehydrogenase family. Monomer.

It participates in secondary metabolite biosynthesis. Its function is as follows. Trans-enoyl reductase; part of the gene cluster that produces the acyltetronic acid derivatives carlosic acid, agglomerin F and carlosic acid methyl ether. The PKS domains of caaA condenses two malonyl-CoAs into an acetyl starter unit, and form 1,3-diketohexanyl-ACP with the help of the trans-enoyl reductase caaB. Next, the C domain of caaA forms the ester bond between the acyl chain and L-malic acid (derived from the TCA cycle) and accepted by the A domain instead of an amino acid. Finally, the terminal reductase/Dieckmann cyclization (R/DKC) domain cyclizes the intermediate and releases the product as carlosic acid. Decarboxylation of carlosic acid followed by formation of the exocyclic double bond is likely to be catalyzed by the cytochrome P450 monooxygenase caaC. Thus, decarboxylation and oxidation would be coupled (performed by one enzyme) through concomitant abstraction of the hydrogen at C-4. Finally, sequential oxidations of the terminal C-10 methyl group to form carboxylic acid would be catalyzed by the 2-oxoglutarate-dependent dioxygenase caaD, which is required for the biosynthesis of agglomerin F. The polypeptide is Trans-enoyl reductase caaB (Aspergillus niger (strain ATCC MYA-4892 / CBS 513.88 / FGSC A1513)).